The primary structure comprises 237 residues: Ribosomal RNA small subunit methyltransferase G (237 aa).

Residues Gly78, Phe83, 129 to 130 (AE), and Arg148 each bind S-adenosyl-L-methionine.

It belongs to the methyltransferase superfamily. RNA methyltransferase RsmG family.

It localises to the cytoplasm. Specifically methylates the N7 position of a guanine in 16S rRNA. The protein is Ribosomal RNA small subunit methyltransferase G of Streptococcus equi subsp. zooepidemicus (strain MGCS10565).